The chain runs to 324 residues: Short-chain dehydrogenase/reductase iacJ (324 aa).

Positions 42, 66, 93, 120, 204, 208, and 239 each coordinate NADP(+). The Proton donor role is filled by Tyr-204. Catalysis depends on Lys-208, which acts as the Lowers pKa of active site Tyr.

This sequence belongs to the short-chain dehydrogenases/reductases (SDR) family.

It functions in the pathway secondary metabolite biosynthesis. In terms of biological role, short-chain dehydrogenase/reductase; part of the gene cluster that mediates the biosynthesis of iso-A82775C, a enylepoxycyclohexane and biosynthetic precursor of the chloropestolide anticancer natural products. Within the cluster, the prenyltransferase iacE prenylates siccayne to generate pestalodiol E, using dimethylallyl diphosphate (DMAPP) as cosubstrate. The probable oxidoreductase iacF is then involved in the epoxidation of pestalodiol F to pestalodiol F, which is further converted to pestalofone A by the short-chain dehydrogenase/reductase iacG. Iso-A82775C is subsequently generated from pestalofone A by the short-chain dehydrogenase/reductase iacC. Iso-A82775C is further condensed with maldoxin via a Diels-Alder reaction to produce the anticancer natural products chloropestolides A to E. In Pestalotiopsis fici (strain W106-1 / CGMCC3.15140), this protein is Short-chain dehydrogenase/reductase iacJ.